Consider the following 367-residue polypeptide: MSFNTFGHLFRVTTWGESHGPALGATVDGCPPGVPITEEALQVWLDKRKPGQNKFTTQRREPDAVEILSGVFEGQSTGSPIQLMIRNADQRSKDYGDIAEKFRPGHADITYWQKYGIRDYRGGGRSSARETAARVAAGGVARAALGALVPDLRITGYMTQMGPHGIDRARFDWEQIDQNPFWTPDAAAAEDWAAYLDGLRKAGSSVGAVIEVTARGVPVGLGAPIYAKLDTDLAAAMMSINAVKAVEIGEGMAAASLTGEANADEIFMGGDGPEYSSNHAGGILGGISTGQDVVVRFAVKPTSSILTTRQTITKSGAPAEIITKGRHDPCVGIRAVPVAEAMMACVLLDHLLLHRGQVGDGPRGAIG.

R48 lines the NADP(+) pocket. FMN-binding positions include 125 to 127 (RSS), 241 to 242 (NA), G285, 300 to 304 (KPTSS), and R326.

This sequence belongs to the chorismate synthase family. Homotetramer. The cofactor is FMNH2.

The catalysed reaction is 5-O-(1-carboxyvinyl)-3-phosphoshikimate = chorismate + phosphate. The protein operates within metabolic intermediate biosynthesis; chorismate biosynthesis; chorismate from D-erythrose 4-phosphate and phosphoenolpyruvate: step 7/7. Its function is as follows. Catalyzes the anti-1,4-elimination of the C-3 phosphate and the C-6 proR hydrogen from 5-enolpyruvylshikimate-3-phosphate (EPSP) to yield chorismate, which is the branch point compound that serves as the starting substrate for the three terminal pathways of aromatic amino acid biosynthesis. This reaction introduces a second double bond into the aromatic ring system. The polypeptide is Chorismate synthase (Dinoroseobacter shibae (strain DSM 16493 / NCIMB 14021 / DFL 12)).